We begin with the raw amino-acid sequence, 1246 residues long: HMG2-induced ER-remodeling protein 1 (1246 aa).

Disordered regions lie at residues 19–241 (KGKR…GSLT), 263–288 (HHIQSHHSSGREQDSPHSESSDLPPI), and 816–836 (MPDASKISDSTDEPDKSKDEK). A compositionally biased stretch (low complexity) spans 27–41 (KSAASTRTSEATTTS). A compositionally biased stretch (polar residues) spans 58-95 (TIASPQRPLSGQNVNNELSNSKPAVSAEKVSQQGQVPT). Residue Ser-102 is modified to Phosphoserine. Phosphothreonine is present on Thr-128. Composition is skewed to low complexity over residues 154-163 (RSSSISTSLN) and 211-230 (SKISTPTSTPTTASSKPSSS). Over residues 271–282 (SGREQDSPHSES) the composition is skewed to basic and acidic residues. At Ser-277 the chain carries Phosphoserine. The residue at position 1013 (Ser-1013) is a Phosphoserine. Polar residues-rich tracts occupy residues 1109 to 1133 (SSRHNSGLPSSANSSRISGSLTPDS) and 1200 to 1215 (SRSPSNDSLQESQQKA). Disordered stretches follow at residues 1109–1157 (SSRH…LPKI) and 1192–1224 (SLYGDELNSRSPSNDSLQESQQKAPLQRPLVED). Phosphothreonine is present on Thr-1130. A phosphoserine mark is found at Ser-1200, Ser-1204, and Ser-1207.

This sequence belongs to the GIP3/HER1 family. As to quaternary structure, may interact with ribosomes.

The protein localises to the cytoplasm. Its function is as follows. Required for HMG2-induced endoplasmic reticulum-remodeling. The sequence is that of HMG2-induced ER-remodeling protein 1 (HER1) from Saccharomyces cerevisiae (strain ATCC 204508 / S288c) (Baker's yeast).